Consider the following 339-residue polypeptide: MRVYYDRDADLNLIKAKKVAIIGYGSQGRAHALNLKDSGAQNVVIALKAGSATIAKAEADGFKVMTVAEAAAWADLMMMATPDELQADIYKADIAGNIRDGAAIAFAHGLNVHFGLIEPKNTVDVVMIAPKGPGHTVRGEYQKGGGVPCLVAIHQNASGNALEVALSYACGVGGGRSGIIETTFQEECETDLFGEQVVLCGGLVELIRAGFETLVEGGYAPEMAYFECLHEVKLIVDLIYEGGIANMNYSISNTAEWGEYVTGPRIITAETKAEMKRVLHDIQTGKFTSDWMQEYRAGAARFKGIRRMNDKHQIEEVGAKLRGMMPWIAKNQLVDKARN.

Residues 1–182 (MRVYYDRDAD…GGGRSGIIET (182 aa)) form the KARI N-terminal Rossmann domain. NADP(+) is bound by residues 24–27 (YGSQ), Lys48, Ser51, Thr53, and 83–86 (DELQ). His108 is an active-site residue. Gly134 is a binding site for NADP(+). Residues 183–328 (TFQEECETDL…AKLRGMMPWI (146 aa)) enclose the KARI C-terminal knotted domain. Asp191, Glu195, Glu227, and Glu231 together coordinate Mg(2+). Ser252 is a binding site for substrate.

The protein belongs to the ketol-acid reductoisomerase family. Mg(2+) is required as a cofactor.

The catalysed reaction is (2R)-2,3-dihydroxy-3-methylbutanoate + NADP(+) = (2S)-2-acetolactate + NADPH + H(+). It catalyses the reaction (2R,3R)-2,3-dihydroxy-3-methylpentanoate + NADP(+) = (S)-2-ethyl-2-hydroxy-3-oxobutanoate + NADPH + H(+). It functions in the pathway amino-acid biosynthesis; L-isoleucine biosynthesis; L-isoleucine from 2-oxobutanoate: step 2/4. Its pathway is amino-acid biosynthesis; L-valine biosynthesis; L-valine from pyruvate: step 2/4. Functionally, involved in the biosynthesis of branched-chain amino acids (BCAA). Catalyzes an alkyl-migration followed by a ketol-acid reduction of (S)-2-acetolactate (S2AL) to yield (R)-2,3-dihydroxy-isovalerate. In the isomerase reaction, S2AL is rearranged via a Mg-dependent methyl migration to produce 3-hydroxy-3-methyl-2-ketobutyrate (HMKB). In the reductase reaction, this 2-ketoacid undergoes a metal-dependent reduction by NADPH to yield (R)-2,3-dihydroxy-isovalerate. This is Ketol-acid reductoisomerase (NADP(+)) from Allorhizobium ampelinum (strain ATCC BAA-846 / DSM 112012 / S4) (Agrobacterium vitis (strain S4)).